We begin with the raw amino-acid sequence, 669 residues long: DNA ligase (669 aa).

NAD(+)-binding positions include 33 to 37, 82 to 83, and E115; these read DVTYD and SL. Residue K117 is the N6-AMP-lysine intermediate of the active site. NAD(+)-binding residues include R138, E172, K286, and K310. Zn(2+)-binding residues include C401, C404, C417, and C422. The BRCT domain maps to 589 to 669; that stretch reads IDSSFLFGKK…DIKNLVNLDD (81 aa).

This sequence belongs to the NAD-dependent DNA ligase family. LigA subfamily. Mg(2+) serves as cofactor. The cofactor is Mn(2+).

The enzyme catalyses NAD(+) + (deoxyribonucleotide)n-3'-hydroxyl + 5'-phospho-(deoxyribonucleotide)m = (deoxyribonucleotide)n+m + AMP + beta-nicotinamide D-nucleotide.. DNA ligase that catalyzes the formation of phosphodiester linkages between 5'-phosphoryl and 3'-hydroxyl groups in double-stranded DNA using NAD as a coenzyme and as the energy source for the reaction. It is essential for DNA replication and repair of damaged DNA. The sequence is that of DNA ligase from Borrelia recurrentis (strain A1).